The sequence spans 527 residues: F-box-like/WD repeat-containing protein TBL1X (527 aa).

Ser2 carries the N-acetylserine modification. The LisH domain occupies Thr4–Gln36. The F-box-like domain maps to Gly41–Ala86. Lys102 is modified (N6-acetyllysine). A disordered region spans residues Thr127–Ile164. WD repeat units follow at residues Gly180–Ser219, Pro236–Leu275, Gln277–Gln316, Phe319–Gln359, Gly360–Asp399, Ala402–Thr450, Lys453–Ser492, and Arg494–Arg526. A Glycyl lysine isopeptide (Lys-Gly) (interchain with G-Cter in SUMO2) cross-link involves residue Lys290.

Belongs to the WD repeat EBI family. As to quaternary structure, homotetramer; dimer of dimers. Component of the N-Cor repressor complex, at least composed of NCOR1, NCOR2, HDAC3, TBL1X, TBL1R, CORO2A and GPS2. Component of a E3 ubiquitin ligase complex containing UBE2D1, SIAH1, CACYBP/SIP, SKP1, APC and TBL1X. Interacts with GPS2 (when sumoylated); leading to protect GPS2 against degradation by the proteasome. Probably part of other corepressor complexes, that do not contain NCOR1 and NCOR2. Interacts with histones H2B, H3a and H4. Interacts with MECP2; recruits TBL1X to the heterochromatin foci. Interacts with USP44. Expressed in the cochlea.

The protein resides in the nucleus. F-box-like protein involved in the recruitment of the ubiquitin/19S proteasome complex to nuclear receptor-regulated transcription units. Plays an essential role in transcription activation mediated by nuclear receptors. Probably acts as integral component of corepressor complexes that mediates the recruitment of the 19S proteasome complex, leading to the subsequent proteasomal degradation of transcription repressor complexes, thereby allowing cofactor exchange. In Mus musculus (Mouse), this protein is F-box-like/WD repeat-containing protein TBL1X (Tbl1x).